Reading from the N-terminus, the 268-residue chain is 4-hydroxy-tetrahydrodipicolinate reductase (268 aa).

Residues 10 to 15 (GASGRM) and Asp36 contribute to the NAD(+) site. Arg37 lines the NADP(+) pocket. NAD(+) is bound by residues 99–101 (GTT) and 123–126 (SANM). Residue His156 is the Proton donor/acceptor of the active site. His157 provides a ligand contact to (S)-2,3,4,5-tetrahydrodipicolinate. Lys160 acts as the Proton donor in catalysis. 166–167 (GT) is a binding site for (S)-2,3,4,5-tetrahydrodipicolinate.

Belongs to the DapB family.

It is found in the cytoplasm. The catalysed reaction is (S)-2,3,4,5-tetrahydrodipicolinate + NAD(+) + H2O = (2S,4S)-4-hydroxy-2,3,4,5-tetrahydrodipicolinate + NADH + H(+). The enzyme catalyses (S)-2,3,4,5-tetrahydrodipicolinate + NADP(+) + H2O = (2S,4S)-4-hydroxy-2,3,4,5-tetrahydrodipicolinate + NADPH + H(+). Its pathway is amino-acid biosynthesis; L-lysine biosynthesis via DAP pathway; (S)-tetrahydrodipicolinate from L-aspartate: step 4/4. Its function is as follows. Catalyzes the conversion of 4-hydroxy-tetrahydrodipicolinate (HTPA) to tetrahydrodipicolinate. This Burkholderia thailandensis (strain ATCC 700388 / DSM 13276 / CCUG 48851 / CIP 106301 / E264) protein is 4-hydroxy-tetrahydrodipicolinate reductase.